Here is a 588-residue protein sequence, read N- to C-terminus: Tannase (588 aa).

Positions 1–18 (MRQHSRMAVAALAAGANA) are cleaved as a signal peptide. Intrachain disulfides connect C25–C71, C194–C502, and C261–C278. Residue S195 is the Acyl-ester intermediate of the active site. Ca(2+) is bound by residues D262, D265, D269, and V271. Q317 is modified (pyrrolidone carboxylic acid). Catalysis depends on charge relay system residues D455 and H501.

This sequence belongs to the tannase family. In terms of assembly, heterooctamer of 4 33 kDa and 4 30 kDa subunits linked by disulfide bond(s). The protein is glycosylated to a carbohydrate content of 22.7%. In terms of processing, the N-terminus of the 30 kDa subunit is blocked.

It catalyses the reaction digallate + H2O = 2 3,4,5-trihydroxybenzoate + H(+). In terms of biological role, hydrolyzes ester bonds of tannic acid to produce gallic acid and glucose. This chain is Tannase, found in Aspergillus oryzae (strain ATCC 42149 / RIB 40) (Yellow koji mold).